Here is a 186-residue protein sequence, read N- to C-terminus: Nucleoside diphosphate kinase, mitochondrial (186 aa).

The N-terminal 32 residues, 1-32, are a transit peptide targeting the mitochondrion; the sequence is MGSLFGRVAALRALLCGPRFQCLLVRPSSGGP. Residues Lys44, Phe92, Arg120, Thr126, Arg137, and Asn147 each coordinate ATP. The active-site Pros-phosphohistidine intermediate is the His150.

This sequence belongs to the NDK family. In terms of assembly, homohexamer. Interacts with OPA1. Interacts with CAPN8. Mg(2+) serves as cofactor. Expressed in the base region of the oxyntic and pyloric mucosae.

Its subcellular location is the mitochondrion intermembrane space. It localises to the mitochondrion matrix. The catalysed reaction is a 2'-deoxyribonucleoside 5'-diphosphate + ATP = a 2'-deoxyribonucleoside 5'-triphosphate + ADP. It carries out the reaction a ribonucleoside 5'-diphosphate + ATP = a ribonucleoside 5'-triphosphate + ADP. In terms of biological role, major role in the synthesis of nucleoside triphosphates other than ATP. The ATP gamma phosphate is transferred to the NDP beta phosphate via a ping-pong mechanism, using a phosphorylated active-site intermediate. Through the catalyzed exchange of gamma-phosphate between di- and triphosphonucleosides participates in regulation of intracellular nucleotide homeostasis. Binds to anionic phospholipids, predominantly to cardiolipin; the binding inhibits its phosphotransfer activity. Acts as a mitochondria-specific NDK; its association with cardiolipin-containing mitochondrial inner membrane is coupled to respiration suggesting that ADP locally regenerated in the mitochondrion innermembrane space by its activity is directly taken up via ANT ADP/ATP translocase into the matrix space to stimulate respiratory ATP regeneration. Proposed to increase GTP-loading on dynamin-related GTPase OPA1 in mitochondria. In vitro can induce liposome cross-linking suggesting that it can cross-link inner and outer membranes to form contact sites, and promotes intermembrane migration of anionic phosphoplipids. Promotes the redistribution of cardiolipin between the mitochondrial inner membrane and outer membrane which is implicated in pro-apoptotic signaling. This is Nucleoside diphosphate kinase, mitochondrial (Nme4) from Mus musculus (Mouse).